We begin with the raw amino-acid sequence, 462 residues long: UPF0236 protein TTE2489 (462 aa).

The protein belongs to the UPF0236 family.

The chain is UPF0236 protein TTE2489 from Caldanaerobacter subterraneus subsp. tengcongensis (strain DSM 15242 / JCM 11007 / NBRC 100824 / MB4) (Thermoanaerobacter tengcongensis).